A 240-amino-acid chain; its full sequence is LexA repressor (240 aa).

The segment at residues 26-46 (FDEMKEALDLASKSGIHRLIT) is a DNA-binding region (H-T-H motif). Residues serine 161 and lysine 199 each act as for autocatalytic cleavage activity in the active site.

It belongs to the peptidase S24 family. In terms of assembly, homodimer.

It carries out the reaction Hydrolysis of Ala-|-Gly bond in repressor LexA.. Functionally, represses a number of genes involved in the response to DNA damage (SOS response), including recA and lexA. In the presence of single-stranded DNA, RecA interacts with LexA causing an autocatalytic cleavage which disrupts the DNA-binding part of LexA, leading to derepression of the SOS regulon and eventually DNA repair. This Brucella melitensis biotype 1 (strain ATCC 23456 / CCUG 17765 / NCTC 10094 / 16M) protein is LexA repressor.